A 163-amino-acid chain; its full sequence is CASP-like protein 1C2 (163 aa).

Over 1 to 7 the chain is Cytoplasmic; it reads MAKLHRL. Residues 8 to 28 traverse the membrane as a helical segment; sequence ISAVLRLAAAGAAAAAAVIMV. Over 29–50 the chain is Extracellular; it reads TSHETTSLFGIEMEAKYSYTPS. A helical transmembrane segment spans residues 51-71; the sequence is FVFFVVAFAVTFAYSLLAAVL. Residues 72–80 are Cytoplasmic-facing; that stretch reads VRPGTTASR. Residues 81–101 traverse the membrane as a helical segment; sequence LVLLSDVTVGMLLTGAVAATG. At 102 to 129 the chain is on the extracellular side; that stretch reads AISQVGKSGNEHAGWLPICAQVQAYCGH. The chain crosses the membrane as a helical span at residues 130-150; that stretch reads VMGALIAGFVSLLLYFLIIMY. Topologically, residues 151–163 are cytoplasmic; that stretch reads SLHAVAEPLCSCH.

The protein belongs to the Casparian strip membrane proteins (CASP) family. Homodimer and heterodimers.

It is found in the cell membrane. This Zea mays (Maize) protein is CASP-like protein 1C2.